Reading from the N-terminus, the 207-residue chain is LexA repressor (207 aa).

A DNA-binding region (H-T-H motif) is located at residues 28–48 (VREIGEAVGLASSFTVHGHLS). Catalysis depends on for autocatalytic cleavage activity residues S130 and K168.

It belongs to the peptidase S24 family. As to quaternary structure, homodimer.

It catalyses the reaction Hydrolysis of Ala-|-Gly bond in repressor LexA.. In terms of biological role, represses a number of genes involved in the response to DNA damage (SOS response), including recA and lexA. In the presence of single-stranded DNA, RecA interacts with LexA causing an autocatalytic cleavage which disrupts the DNA-binding part of LexA, leading to derepression of the SOS regulon and eventually DNA repair. This is LexA repressor from Staphylococcus aureus (strain Newman).